A 190-amino-acid polypeptide reads, in one-letter code: GATA transcription factor 17 (190 aa).

A compositionally biased stretch (basic and acidic residues) spans 1–14 (MSEGSEDTKTKLDS). Disordered regions lie at residues 1–42 (MSEG…DTKR) and 77–101 (RQAA…NDLN). Residues 38–92 (GDTKRTCVDCGTIRTPLWRGGPAGPKSLCNACGIKSRKKRQAALGMRSEEKKKNR) form a GATA-type zinc finger.

Belongs to the type IV zinc-finger family. Class B subfamily.

Its subcellular location is the nucleus. Functionally, transcriptional regulator that specifically binds 5'-GATA-3' or 5'-GAT-3' motifs within gene promoters. This is GATA transcription factor 17 (GATA17) from Arabidopsis thaliana (Mouse-ear cress).